A 667-amino-acid chain; its full sequence is Coiled-coil domain-containing protein 154 (667 aa).

Coiled-coil stretches lie at residues 76-182, 215-302, 384-410, and 457-521; these read VVEL…QEAG, RRVD…GQHE, LLRE…SGHL, and LRGV…KEDN.

The protein localises to the early endosome. In Homo sapiens (Human), this protein is Coiled-coil domain-containing protein 154.